Here is a 342-residue protein sequence, read N- to C-terminus: Protein RecA (342 aa).

Belongs to the RecA family.

It localises to the cytoplasm. Its function is as follows. Can catalyze the hydrolysis of ATP in the presence of single-stranded DNA, the ATP-dependent uptake of single-stranded DNA by duplex DNA, and the ATP-dependent hybridization of homologous single-stranded DNAs. It interacts with LexA causing its activation and leading to its autocatalytic cleavage. This is Protein RecA from Pectobacterium carotovorum (Erwinia carotovora).